The sequence spans 130 residues: Small ribosomal subunit protein uS11 (130 aa).

Belongs to the universal ribosomal protein uS11 family. As to quaternary structure, part of the 30S ribosomal subunit. Interacts with proteins S7 and S18. Binds to IF-3.

Functionally, located on the platform of the 30S subunit, it bridges several disparate RNA helices of the 16S rRNA. Forms part of the Shine-Dalgarno cleft in the 70S ribosome. The chain is Small ribosomal subunit protein uS11 from Xylella fastidiosa (strain M12).